A 182-amino-acid polypeptide reads, in one-letter code: MYKKLITFLFVIGALASYSNNEYTPFNKLSVKLYIDGVDNIENSYTDDNNELVLNFKEYTISIITESCDVGFDSIDIDVINDYKIIDMYTIDSSTIQRRGHTCRISTKLSCHYDKYPYIHKYDGDERQYSITAEGKCYKGIKYEISMINDDTLLRKHTLKIGSTYIFDRHGHSNTYYSKYDF.

Positions 1–16 are cleaved as a signal peptide; that stretch reads MYKKLITFLFVIGALA.

The protein belongs to the orthopoxvirus OPG192 family.

It is found in the host endoplasmic reticulum. This is Protein OPG192 (OPG192) from Vaccinia virus (strain Copenhagen) (VACV).